A 486-amino-acid chain; its full sequence is Vesicular GABA transporter (486 aa).

Residues 1–93 (MASNRFQNLQ…EASEPISALQ (93 aa)) are Cytoplasmic-facing. Over residues 29-46 (LNEVPSYQNQPQTGESGS) the composition is skewed to polar residues. The tract at residues 29–85 (LNEVPSYQNQPQTGESGSNPPPHDRLEPIQESVVSEQPQKDDINKQEEAKDDGHGEA) is disordered. Residues 66-85 (PQKDDINKQEEAKDDGHGEA) are compositionally biased toward basic and acidic residues. A helical transmembrane segment spans residues 94–114 (AAWNVTNAIQGMFIVGLPIAV). Topologically, residues 115-119 (KVGGW) are lumenal, vesicle. The chain crosses the membrane as a helical span at residues 120 to 140 (WSIGAMVGVAYVCYWTGVLLI). Topologically, residues 141 to 167 (ECLYENGVKKRKTYREIADFYKPGFGK) are cytoplasmic. Residues 168-188 (WVLAAQLTELLSTCIIYLVLA) form a helical membrane-spanning segment. Residues 189-203 (ADLLQSCFPSVDKAG) lie on the Lumenal, vesicle side of the membrane. Residues 204-224 (WMMITSASLLTCSFLDDLQIV) traverse the membrane as a helical segment. Over 225–228 (SRLS) the chain is Cytoplasmic. A helical transmembrane segment spans residues 229-249 (FFNAISHLIVNLIMVLYCLSF). Over 250–263 (VSQWSFSTITFSLN) the chain is Lumenal, vesicle. The helical transmembrane segment at 264-284 (INTLPTIVGMVVFGYTSHIFL) threads the bilayer. Residues 285–305 (PNLEGNMKNPAQFNVMLKWSH) are Cytoplasmic-facing. Residues 306-326 (IAAAVFKVVFGMLGFLTFGEL) traverse the membrane as a helical segment. Residues 327 to 341 (TQEEISNSLPNQSFK) are Lumenal, vesicle-facing. Residue asparagine 337 is glycosylated (N-linked (GlcNAc...) asparagine). The helical transmembrane segment at 342–362 (ILVNLILVVKALLSYPLPFYA) threads the bilayer. Over 363–398 (AVQLLKNNLFLGYPQTPFTSCYSPDKSLREWAVTLR) the chain is Cytoplasmic. A helical transmembrane segment spans residues 399 to 419 (IILVLFTLFVALSVPYLVELM). Topologically, residues 420 to 421 (GL) are lumenal, vesicle. The chain crosses the membrane as a helical span at residues 422 to 442 (VGNITGTMLSFIWPALFHLYI). The Cytoplasmic portion of the chain corresponds to 443–457 (KEKTLNNFEKRFDQG). The chain crosses the membrane as a helical span at residues 458–478 (IIIMGCSVCISGVYFSSMELL). The Lumenal, vesicle segment spans residues 479–486 (RAINSADS).

Belongs to the amino acid/polyamine transporter 2 family.

Its subcellular location is the cytoplasmic vesicle membrane. Functionally, involved in the uptake of GABA into the synaptic vesicles. The protein is Vesicular GABA transporter (unc-47) of Caenorhabditis elegans.